Here is a 217-residue protein sequence, read N- to C-terminus: Large ribosomal subunit protein uL4c (217 aa).

Residues 51-85 (HRNRNAHTQTRGEVSGGGRKPWKQKGTGRARAGSN) form a disordered region.

Belongs to the universal ribosomal protein uL4 family. In terms of assembly, part of the 50S ribosomal subunit.

The protein localises to the plastid. The protein resides in the chloroplast. Its function is as follows. Probably binds the 23S rRNA. The chain is Large ribosomal subunit protein uL4c (rpl4) from Gracilaria tenuistipitata var. liui (Red alga).